Consider the following 261-residue polypeptide: Transcription repressor OFP15 (261 aa).

Positions Met-1 to Ser-28 are disordered. The span at Ser-11–Ser-28 shows a compositional bias: low complexity. The region spanning Phe-112–Asn-172 is the OVATE domain.

As to quaternary structure, interacts with BLH1 and BLH3. Expressed in roots, cauline leaves, shoots, flower buds and siliques.

It localises to the nucleus. Its function is as follows. Transcriptional repressor that regulates multiple aspects of plant growth and development through the regulation of BEL1-LIKE (BLH) and KNOX TALE (KNAT) homeodomain transcription factors. The protein is Transcription repressor OFP15 (OFP15) of Arabidopsis thaliana (Mouse-ear cress).